Here is a 58-residue protein sequence, read N- to C-terminus: Small ribosomal subunit protein bS21 (58 aa).

The tract at residues 27–58 (GVLSEARKHEHYEKPSVKRKKKSEAARKRKFK) is disordered. Residues 31-42 (EARKHEHYEKPS) are compositionally biased toward basic and acidic residues. Basic residues predominate over residues 43–58 (VKRKKKSEAARKRKFK).

It belongs to the bacterial ribosomal protein bS21 family.

The sequence is that of Small ribosomal subunit protein bS21 from Desulfitobacterium hafniense (strain DSM 10664 / DCB-2).